An 88-amino-acid polypeptide reads, in one-letter code: Small ribosomal subunit protein bS16 (88 aa).

This sequence belongs to the bacterial ribosomal protein bS16 family.

This is Small ribosomal subunit protein bS16 from Geobacter metallireducens (strain ATCC 53774 / DSM 7210 / GS-15).